Consider the following 307-residue polypeptide: Mitochondrial brown fat uncoupling protein 1 (307 aa).

Residues 1–10 are Mitochondrial intermembrane-facing; the sequence is MVSQTTSEVQ. Residues 11–32 form a helical membrane-spanning segment; that stretch reads PTMGVKIFSAGVAACLADIITF. 3 Solcar repeats span residues 11–102, 111–201, and 210–295; these read PTMG…VQEY, PTLV…MKGA, and DDVP…LKKE. Residues 33-73 lie on the Mitochondrial matrix side of the membrane; that stretch reads PLDTAKVRLQIQGEGQTSSTIRYKGVLGTITTLAKTEGLPK. Lysine 56 contributes to the fatty acid 16:0 binding site. Residues 74 to 96 traverse the membrane as a helical segment; sequence LYSGLPAGIQRQISFASLRIGLY. At 97-116 the chain is on the mitochondrial intermembrane side; it reads DTVQEYFSSGKETPPTLVNR. The helical transmembrane segment at 117–133 threads the bilayer; that stretch reads ISAGLMTGGVAVFIGQP. The Mitochondrial matrix segment spans residues 134–178; that stretch reads TEVVKVRLQAQSHLHGIKPRYTGTYNAYRIIATTESLSTLWKGTT. The helical transmembrane segment at 179–195 threads the bilayer; sequence PNLLRNVIINCTELVTY. Residues 196–212 are Mitochondrial intermembrane-facing; it reads DLMKGALVNNQILADDV. Residues 213-232 traverse the membrane as a helical segment; the sequence is PCHLLSALVAGFCTTFLASP. The Mitochondrial matrix segment spans residues 233–266; that stretch reads ADVVKTRFINSLPGQYPSVPSCAMTMFTKEGPTA. Cysteine 254 is subject to Cysteine sulfenic acid (-SOH). The helical transmembrane segment at 267 to 289 threads the bilayer; it reads FFKGFVPSFLRLASWNVIMFVCF. Lysine 269 contributes to the fatty acid 16:0 binding site. The Mitochondrial intermembrane segment spans residues 290–307; it reads EQLKKELMKSRQTVDCTT.

It belongs to the mitochondrial carrier (TC 2.A.29) family. In terms of assembly, most probably functions as a monomer. Binds one purine nucleotide per monomer. However, has also been suggested to function as a homodimer or a homotetramer. Tightly associates with cardiolipin in the mitochondrion inner membrane; may stabilize and regulate its activity. In terms of processing, may undergo sulfenylation upon cold exposure. May increase the sensitivity of UCP1 thermogenic function to the activation by noradrenaline probably through structural effects. May undergo ubiquitin-mediated proteasomal degradation. In terms of tissue distribution, brown adipose tissue.

It localises to the mitochondrion inner membrane. It catalyses the reaction H(+)(in) = H(+)(out). Has no constitutive proton transporter activity and has to be activated by long-chain fatty acids/LCFAs. Inhibited by purine nucleotides. Both purine nucleotides and LCFAs bind the cytosolic side of the transporter and directly compete to activate or inhibit it. Activated by noradrenaline and reactive oxygen species. Despite lacking canonical translational encoding for selenocysteine, a small pool of the protein has been observed to selectively incorporate selenocysteine at 'Cys-254'. Selenocysteine-modified protein is highly sensitive to redox modification and may constitute a pool of protein highly sensitive to activation by elevated levels of reactive oxygen species (ROS). Functionally, mitochondrial protein responsible for thermogenic respiration, a specialized capacity of brown adipose tissue and beige fat that participates in non-shivering adaptive thermogenesis to temperature and diet variations and more generally to the regulation of energy balance. Functions as a long-chain fatty acid/LCFA and proton symporter, simultaneously transporting one LCFA and one proton through the inner mitochondrial membrane. However, LCFAs remaining associated with the transporter via their hydrophobic tails, it results in an apparent transport of protons activated by LCFAs. Thereby, dissipates the mitochondrial proton gradient and converts the energy of substrate oxydation into heat instead of ATP. Regulates the production of reactive oxygen species/ROS by mitochondria. In Phodopus sungorus (Striped hairy-footed hamster), this protein is Mitochondrial brown fat uncoupling protein 1.